We begin with the raw amino-acid sequence, 89 residues long: Small ribosomal subunit protein bS20 (89 aa).

This sequence belongs to the bacterial ribosomal protein bS20 family.

Binds directly to 16S ribosomal RNA. This Phenylobacterium zucineum (strain HLK1) protein is Small ribosomal subunit protein bS20.